A 660-amino-acid chain; its full sequence is PAN2-PAN3 deadenylation complex subunit PAN3 (660 aa).

The C3H1-type zinc-finger motif lies at 7 to 36 (SAKDTFCKNVLIYGYCKYENKGCAFSHTVK). Disordered stretches follow at residues 36 to 60 (KPTS…TNAD) and 150 to 186 (SPVM…PTSA). The segment covering 43–59 (GSQGSNATTNSSGNTNA) has biased composition (low complexity). The PABPC-interacting motif-2 (PAM-2) motif lies at 59-79 (ADMKKKFNFNTPSFQPSTVPN). Residues 150–159 (SPVMAQSVST) are compositionally biased toward polar residues. Residues 252–528 (QTLPRSNLPD…LQEFNRNHLS (277 aa)) form a pseudokinase domain region. Residues Arg-304, 358-365 (DYFPNSNT), and 415-416 (SK) contribute to the ATP site. Residues 529–567 (RRILNFCSNAQDSQDFMESQLSTELENARVFRLITKLNF) are a coiled coil. The interval 568 to 660 (IIDRPEYDND…DSAFRTLTRG (93 aa)) is knob domain.

The protein belongs to the protein kinase superfamily. PAN3 family. As to quaternary structure, homodimer. Forms a heterotrimer with a catalytic subunit PAN2 to form the poly(A)-nuclease (PAN) deadenylation complex. Interacts (via PAM-2 motif) with poly(A)-binding protein PAB1 (via PABC domain), conferring substrate specificity of the enzyme complex.

It is found in the cytoplasm. Its function is as follows. Regulatory subunit of the poly(A)-nuclease (PAN) deadenylation complex, one of two cytoplasmic mRNA deadenylases involved in mRNA turnover. PAN specifically shortens poly(A) tails of RNA and the activity is stimulated by poly(A)-binding protein PAB1. PAN deadenylation is followed by rapid degradation of the shortened mRNA tails by the CCR4-NOT complex. Deadenylated mRNAs are then degraded by two alternative mechanisms, namely exosome-mediated 3'-5' exonucleolytic degradation, or deadenylation-dependent mRNA decaping and subsequent 5'-3' exonucleolytic degradation by XRN1. May also be involved in post-transcriptional maturation of mRNA poly(A) tails. PAN3 acts as a positive regulator for PAN activity, recruiting the catalytic subunit PAN2 to mRNA via its interaction with RNA and with PAB1. The chain is PAN2-PAN3 deadenylation complex subunit PAN3 from Debaryomyces hansenii (strain ATCC 36239 / CBS 767 / BCRC 21394 / JCM 1990 / NBRC 0083 / IGC 2968) (Yeast).